We begin with the raw amino-acid sequence, 318 residues long: Protoheme IX farnesyltransferase (318 aa).

The next 9 membrane-spanning stretches (helical) occupy residues Leu-37–Ile-57, Ala-58–Trp-78, Val-100–Met-120, Val-122–Val-142, Ile-155–Gly-175, Phe-182–Tyr-202, Ile-228–Ala-248, Leu-251–Trp-271, and Ile-291–Gly-311.

It belongs to the UbiA prenyltransferase family. Protoheme IX farnesyltransferase subfamily.

The protein resides in the cell inner membrane. It catalyses the reaction heme b + (2E,6E)-farnesyl diphosphate + H2O = Fe(II)-heme o + diphosphate. Its pathway is porphyrin-containing compound metabolism; heme O biosynthesis; heme O from protoheme: step 1/1. Converts heme B (protoheme IX) to heme O by substitution of the vinyl group on carbon 2 of heme B porphyrin ring with a hydroxyethyl farnesyl side group. The protein is Protoheme IX farnesyltransferase of Parvibaculum lavamentivorans (strain DS-1 / DSM 13023 / NCIMB 13966).